We begin with the raw amino-acid sequence, 31 residues long: Spectrin beta chain, non-erythrocytic 1 (31 aa).

Spectrin repeat units lie at residues 1-10, 11-19, and 20-31; these read VLLLSQDYGK, YKEVAELTR, and TQILAASYELHK. Tyr-27 bears the Phosphotyrosine mark.

It belongs to the spectrin family. Interacts with ANK2. Interacts with CPNE4 (via VWFA domain). Like erythrocyte spectrin, the spectrin-like proteins are capable to form dimers which can further associate to tetramers. Associates with the gamma-tubulin complex in brain, but not in kidney, liver, sperm, or uterus. Interacts with CAMSAP1. Can form heterodimers with SPTAN1.

The protein resides in the cytoplasm. The protein localises to the cytoskeleton. It localises to the myofibril. Its subcellular location is the sarcomere. It is found in the m line. The protein resides in the cytosol. The protein localises to the cell membrane. In terms of biological role, fodrin, which seems to be involved in secretion, interacts with calmodulin in a calcium-dependent manner and is thus candidate for the calcium-dependent movement of the cytoskeleton at the membrane. Plays a critical role in central nervous system development and function. This Capra hircus (Goat) protein is Spectrin beta chain, non-erythrocytic 1 (SPTBN1).